The following is a 381-amino-acid chain: Neuropeptide Y receptor type 2 (381 aa).

A disordered region spans residues 1–35 (MGPIGAEADENQTVEEMKVEQYGPQTTPRGELVPD). The Extracellular segment spans residues 1 to 51 (MGPIGAEADENQTVEEMKVEQYGPQTTPRGELVPDPEPELIDSTKLIEVQV). A glycan (N-linked (GlcNAc...) asparagine) is linked at Asn11. A helical transmembrane segment spans residues 52 to 72 (VLILAYCSIILLGVIGNSLVI). Residues 73–86 (HVVIKFKSMRTVTN) are Cytoplasmic-facing. The helical transmembrane segment at 87 to 107 (FFIANLAVADLLVNTLCLPFT) threads the bilayer. Residues 108–124 (LTYTLMGEWKMGPVLCH) are Extracellular-facing. The cysteines at positions 123 and 203 are disulfide-linked. The chain crosses the membrane as a helical span at residues 125 to 145 (LVPYAQGLAVQVSTITLTVIA). Residues 146–165 (LDRHRCIVYHLESKISKRIS) lie on the Cytoplasmic side of the membrane. A helical transmembrane segment spans residues 166 to 186 (FLIIGLAWGISALLASPLAIF). Topologically, residues 187-216 (REYSLIEIIPDFEIVACTEKWPGEEKSIYG) are extracellular. The chain crosses the membrane as a helical span at residues 217–237 (TVYSLSSLLILYVLPLGIISF). The Cytoplasmic portion of the chain corresponds to 238–268 (SYTRIWSKLKNHVSPGAANDHYHQRRQKTTK). The helical transmembrane segment at 269 to 289 (MLVCVVVVFAVSWLPLHAFQL) threads the bilayer. Residues 290–304 (AVDIDSQVLDLKEYK) lie on the Extracellular side of the membrane. A helical transmembrane segment spans residues 305–325 (LIFTVFHIIAMCSTFANPLLY). The Cytoplasmic portion of the chain corresponds to 326-381 (GWMNSNYRKAFLSAFRCEQRLDAIHSEVSVTFKAKKNLEVRKNSGPNDSFTEATNV). A lipid anchor (S-palmitoyl cysteine) is attached at Cys342.

Belongs to the G-protein coupled receptor 1 family. High levels in amygdala, corpus callosum, hippocampus and subthalamic nucleus. Also detectable in caudate nucleus, hypothalamus and substantia nigra.

The protein resides in the cell membrane. Its function is as follows. Receptor for neuropeptide Y and peptide YY. The rank order of affinity of this receptor for pancreatic polypeptides is PYY &gt; NPY &gt; PYY (3-36) &gt; NPY (2-36) &gt; [Ile-31, Gln-34] PP &gt; [Leu-31, Pro-34] NPY &gt; PP, [Pro-34] PYY and NPY free acid. This Homo sapiens (Human) protein is Neuropeptide Y receptor type 2 (NPY2R).